The chain runs to 407 residues: Imidazolonepropionase (407 aa).

2 residues coordinate Fe(3+): His68 and His70. Residues His68 and His70 each contribute to the Zn(2+) site. 4-imidazolone-5-propanoate contacts are provided by Arg77, Tyr140, and His173. Tyr140 lines the N-formimidoyl-L-glutamate pocket. A Fe(3+)-binding site is contributed by His238. His238 is a binding site for Zn(2+). A 4-imidazolone-5-propanoate-binding site is contributed by Gln241. Asp313 is a Fe(3+) binding site. Residue Asp313 participates in Zn(2+) binding. Residues Asn315 and Gly317 each coordinate N-formimidoyl-L-glutamate. Thr318 contributes to the 4-imidazolone-5-propanoate binding site.

It belongs to the metallo-dependent hydrolases superfamily. HutI family. Requires Zn(2+) as cofactor. Fe(3+) is required as a cofactor.

Its subcellular location is the cytoplasm. It catalyses the reaction 4-imidazolone-5-propanoate + H2O = N-formimidoyl-L-glutamate. The protein operates within amino-acid degradation; L-histidine degradation into L-glutamate; N-formimidoyl-L-glutamate from L-histidine: step 3/3. Functionally, catalyzes the hydrolytic cleavage of the carbon-nitrogen bond in imidazolone-5-propanoate to yield N-formimidoyl-L-glutamate. It is the third step in the universal histidine degradation pathway. The protein is Imidazolonepropionase of Burkholderia ambifaria (strain MC40-6).